Reading from the N-terminus, the 570-residue chain is Cytoplasmic polyadenylation element-binding protein 2 (570 aa).

Residues 434 to 516 (LVAFIGGVPR…KRVEIKPYFF (83 aa)) form the RRM domain.

As to expression, expressed specifically in the spermatogenic germ line.

In terms of biological role, cytoplasmic polyadenylation element binding protein that binds to and regulates the translation of specific mRNAs. Not required for oogenesis. This chain is Cytoplasmic polyadenylation element-binding protein 2 (cpb-2), found in Caenorhabditis elegans.